Here is a 381-residue protein sequence, read N- to C-terminus: CCN family member 1 (381 aa).

The signal sequence occupies residues 1–24 (MSSRIARALALVVTLLHLTRLALS). Residues 25 to 94 (TCPAACHCPL…TALKGICRAQ (70 aa)) form the IGFBP N-terminal domain. 6 cysteine pairs are disulfide-bonded: Cys26/Cys50, Cys30/Cys52, Cys32/Cys53, Cys39/Cys56, Cys64/Cys78, and Cys70/Cys91. One can recognise a VWFC domain in the interval 98–164 (RPCEYNSRIY…GQCCEEWVCD (67 aa)). Phosphoserine; by FAM20C is present on Ser188. In terms of domain architecture, TSP type-1 spans 228 to 273 (KCIVQTTSWSQCSKTCGTGISTRVTNDNPECRLVKETRICEVRPCG). The segment at 279–315 (SLKKGKKCSKTKKSPEPVRFTYAGCLSVKKYRPKYCG) is heparin-binding. Intrachain disulfides connect Cys286/Cys323, Cys303/Cys337, Cys314/Cys353, Cys317/Cys355, and Cys322/Cys359. The CTCK domain maps to 286 to 360 (CSKTKKSPEP…QSCKCNYNCP (75 aa)).

This sequence belongs to the CCN family. In terms of assembly, interaction with integrins is heparin- and cell-type-dependent and promotes cell adhesion. In skin fibroblasts it binds ITGA6/ITGB1, in endothelial cells, binds ITGAV/ITGB3 and in platelets, ITGA2B/ITGB3. Binds, in vitro, ITGAV/ITGB5.

Its subcellular location is the secreted. Functionally, promotes cell proliferation, chemotaxis, angiogenesis and cell adhesion. Appears to play a role in wound healing by up-regulating, in skin fibroblasts, the expression of a number of genes involved in angiogenesis, inflammation and matrix remodeling including VEGA-A, VEGA-C, MMP1, MMP3, TIMP1, uPA, PAI-1 and integrins alpha-3 and alpha-5. CCN1-mediated gene regulation is dependent on heparin-binding. Down-regulates the expression of alpha-1 and alpha-2 subunits of collagen type-1. Promotes cell adhesion and adhesive signaling through integrin alpha-6/beta-1, cell migration through integrin alpha-v/beta-5 and cell proliferation through integrin alpha-v/beta-3. In Homo sapiens (Human), this protein is CCN family member 1.